The sequence spans 236 residues: NLP effector protein 3 (236 aa).

Positions 1 to 19 (MNLLGFLAVVALSTASVQA) are cleaved as a signal peptide. Residues 103–113 (AIMYSWYFPKD) carry the Conserved undecapeptide motif I motif. The Hepta-peptide GHRHDWE motif II motif lies at 120-126 (GHRHDWE).

The protein belongs to the Necrosis inducing protein (NPP1) family.

It localises to the secreted. In terms of biological role, secreted effector that contributes to virulence during infection by P.capsici. Induces distinct chlorosis at 3 days after inoculation of host C.annuum leaves, and all the chlorotic areas gradually turn brown and become moderately necrotic at 7 days after inoculation. Leads only to chlorotic areas, without necrosis at 7 days after non-host N.benthamiana leaves infection. Induces cell death in hot pepper. The protein is NLP effector protein 3 of Phytophthora capsici.